A 203-amino-acid chain; its full sequence is Outer-membrane lipoprotein carrier protein (203 aa).

An N-terminal signal peptide occupies residues 1-21 (MKKIAITCALLSSLVASSVWA).

Belongs to the LolA family. Monomer.

It is found in the periplasm. Participates in the translocation of lipoproteins from the inner membrane to the outer membrane. Only forms a complex with a lipoprotein if the residue after the N-terminal Cys is not an aspartate (The Asp acts as a targeting signal to indicate that the lipoprotein should stay in the inner membrane). The protein is Outer-membrane lipoprotein carrier protein of Escherichia coli O139:H28 (strain E24377A / ETEC).